A 1048-amino-acid chain; its full sequence is 3-hydroxy-3-methylglutaryl-coenzyme A reductase (1048 aa).

At 1–32 (MDPVVRKPDPGGVQHRVTKALRAIVGHACRHP) the chain is on the cytoplasmic side. A helical transmembrane segment spans residues 33 to 53 (IHTLLVTALTAATTHLHVLEG). Topologically, residues 54-220 (TYQATHRGLA…FLHRVHHAET (167 aa)) are lumenal. The chain crosses the membrane as a helical span at residues 221 to 241 (VDLVIIGLSYLAMNMTVVSLF). The SSD domain maps to 222-403 (DLVIIGLSYL…FTFYATILCV (182 aa)). Residues 242 to 250 (RVMRHLGSR) lie on the Cytoplasmic side of the membrane. A helical transmembrane segment spans residues 251–271 (FWLAASVLLSGAFAFVLGLGI). Over 272 to 276 (TTTCD) the chain is Lumenal. The helical transmembrane segment at 277 to 297 (VPVDMLLLFEGIPYLVLTVGF) threads the bilayer. Over 298–348 (EKPIQLTRAVLCVSEELWGGGQRQVPNGASSDDSRQNQLIPNIIQLAVDRE) the chain is Cytoplasmic. A helical transmembrane segment spans residues 349–369 (GWYIVRSYLLEIGALALGAVL). The Lumenal portion of the chain corresponds to 370 to 377 (RPKDSLGH). The helical transmembrane segment at 378–398 (FCFLAAWTLLIDAVLLFTFYA) threads the bilayer. Residues 399-439 (TILCVKLEITRIRSPGGLGQVNAKHPSGIFGHKVKSTNITW) are Cytoplasmic-facing. A helical transmembrane segment spans residues 440–460 (WKLLTVGGFVLCHFLQLSPFF). Residues 461-542 (YRVMGEYMAN…LDGLESPLGR (82 aa)) lie on the Lumenal side of the membrane. Asparagine 470 and asparagine 520 each carry an N-linked (GlcNAc...) asparagine glycan. A helical transmembrane segment spans residues 543–563 (LCLMGALVVSLVLNNHLIHAA). The Cytoplasmic portion of the chain corresponds to 564-1048 (RWHAWPQARE…NRSAGATVKK (485 aa)). The active-site Charge relay system is the glutamate 729. 735–741 (SASRGCK) is a binding site for CoA. Residues 796 to 798 (SRF) and 823 to 831 (DAMGMNMIS) each bind NADP(+). The Charge relay system role is filled by lysine 863. 892–894 (VLK) is a CoA binding site. Aspartate 939 serves as the catalytic Charge relay system. 1034-1035 (AH) is a CoA binding site. Residue histidine 1035 is the Proton donor of the active site. Position 1039–1040 (1039–1040 (NR)) interacts with NADP(+).

Belongs to the HMG-CoA reductase family.

It is found in the endoplasmic reticulum membrane. The enzyme catalyses (R)-mevalonate + 2 NADP(+) + CoA = (3S)-3-hydroxy-3-methylglutaryl-CoA + 2 NADPH + 2 H(+). The protein operates within metabolic intermediate biosynthesis; (R)-mevalonate biosynthesis; (R)-mevalonate from acetyl-CoA: step 3/3. Its function is as follows. HMG-CoA reductase; part of the first module of ergosterol biosynthesis pathway that includes the early steps of the pathway, conserved across all eukaryotes, and which results in the formation of mevalonate from acetyl-coenzyme A (acetyl-CoA). In this module, the cytosolic acetyl-CoA acetyltransferase catalyzes the formation of acetoacetyl-CoA. The hydroxymethylglutaryl-CoA synthase then condenses acetyl-CoA with acetoacetyl-CoA to form HMG-CoA. The rate-limiting step of the early module is the reduction to mevalonate by the 3-hydroxy-3-methylglutaryl-coenzyme A (HMG-CoA) reductase. The polypeptide is 3-hydroxy-3-methylglutaryl-coenzyme A reductase (Aspergillus terreus).